Consider the following 160-residue polypeptide: Phosphopantetheine adenylyltransferase (160 aa).

T11 lines the substrate pocket. ATP-binding positions include 11-12 (TF) and H19. Substrate-binding residues include K43, T75, and R89. Residues 90 to 92 (GLR), E100, and 125 to 131 (YSFLSSS) each bind ATP.

This sequence belongs to the bacterial CoaD family. Homohexamer. It depends on Mg(2+) as a cofactor.

It localises to the cytoplasm. It carries out the reaction (R)-4'-phosphopantetheine + ATP + H(+) = 3'-dephospho-CoA + diphosphate. Its pathway is cofactor biosynthesis; coenzyme A biosynthesis; CoA from (R)-pantothenate: step 4/5. Reversibly transfers an adenylyl group from ATP to 4'-phosphopantetheine, yielding dephospho-CoA (dPCoA) and pyrophosphate. The polypeptide is Phosphopantetheine adenylyltransferase (Listeria monocytogenes serovar 1/2a (strain ATCC BAA-679 / EGD-e)).